The chain runs to 515 residues: Bifunctional purine biosynthesis protein PurH (515 aa).

The MGS-like domain maps to 1 to 145; that stretch reads MTKRALISVS…KNHASVTVVV (145 aa).

Belongs to the PurH family.

The catalysed reaction is (6R)-10-formyltetrahydrofolate + 5-amino-1-(5-phospho-beta-D-ribosyl)imidazole-4-carboxamide = 5-formamido-1-(5-phospho-D-ribosyl)imidazole-4-carboxamide + (6S)-5,6,7,8-tetrahydrofolate. The enzyme catalyses IMP + H2O = 5-formamido-1-(5-phospho-D-ribosyl)imidazole-4-carboxamide. Its pathway is purine metabolism; IMP biosynthesis via de novo pathway; 5-formamido-1-(5-phospho-D-ribosyl)imidazole-4-carboxamide from 5-amino-1-(5-phospho-D-ribosyl)imidazole-4-carboxamide (10-formyl THF route): step 1/1. It participates in purine metabolism; IMP biosynthesis via de novo pathway; IMP from 5-formamido-1-(5-phospho-D-ribosyl)imidazole-4-carboxamide: step 1/1. The protein is Bifunctional purine biosynthesis protein PurH of Streptococcus agalactiae serotype Ia (strain ATCC 27591 / A909 / CDC SS700).